The following is a 285-amino-acid chain: Probable endonuclease 4 (285 aa).

Zn(2+) is bound by residues His-69, His-109, Glu-145, Asp-179, His-182, His-216, Asp-229, His-231, and Glu-261.

Belongs to the AP endonuclease 2 family. Zn(2+) serves as cofactor.

It catalyses the reaction Endonucleolytic cleavage to 5'-phosphooligonucleotide end-products.. Functionally, endonuclease IV plays a role in DNA repair. It cleaves phosphodiester bonds at apurinic or apyrimidinic (AP) sites, generating a 3'-hydroxyl group and a 5'-terminal sugar phosphate. The chain is Probable endonuclease 4 from Escherichia coli (strain SMS-3-5 / SECEC).